The primary structure comprises 101 residues: Large ribosomal subunit protein uL24 (101 aa).

This sequence belongs to the universal ribosomal protein uL24 family. Part of the 50S ribosomal subunit.

Functionally, one of two assembly initiator proteins, it binds directly to the 5'-end of the 23S rRNA, where it nucleates assembly of the 50S subunit. One of the proteins that surrounds the polypeptide exit tunnel on the outside of the subunit. The protein is Large ribosomal subunit protein uL24 of Clostridioides difficile (strain 630) (Peptoclostridium difficile).